The primary structure comprises 297 residues: uncharacterized protein (297 aa).

In terms of domain architecture, HTH araC/xylS-type spans 187 to 285 (EKLIATLHAS…GYAPSAVLKN (99 aa)). DNA-binding regions (H-T-H motif) lie at residues 204 to 225 (ADMA…LRYT) and 252 to 275 (VGEV…KHKF).

This is an uncharacterized protein from Escherichia coli (strain K12).